A 617-amino-acid polypeptide reads, in one-letter code: Electron transfer flavoprotein-ubiquinone oxidoreductase, mitochondrial (617 aa).

The transit peptide at 1–33 (MQVLLARLACPVYQCFHAIKIKKNYLPLCATRW) directs the protein to the mitochondrion. Residue 71–85 (VVIVGAGPAGLSAAA) coordinates FAD. K96 bears the N6-acetyllysine mark. Residues 109 to 130 (IGAHTLSGACLDPRALQELFPD) lie within the membrane without spanning it. 2 positions are modified to N6-acetyllysine: K132 and K223. Residues G305 and G306 each contribute to the a ubiquinone site. K357 is subject to N6-acetyllysine. Residues 428-447 (IGLDVTEYEDNLKKSWVWKE) lie within the membrane without spanning it. S551 bears the Phosphoserine mark. C561, C586, C589, and C592 together coordinate [4Fe-4S] cluster. Residues 577-606 (FRLQINAQNCVHCKTCDIKDPSQNINWVVP) form the 4Fe-4S ferredoxin-type domain.

It belongs to the ETF-QO/FixC family. As to quaternary structure, monomer. The cofactor is [4Fe-4S] cluster. FAD is required as a cofactor.

It is found in the mitochondrion inner membrane. It carries out the reaction a ubiquinone + reduced [electron-transfer flavoprotein] = a ubiquinol + oxidized [electron-transfer flavoprotein] + H(+). Accepts electrons from ETF and reduces ubiquinone. This Bos taurus (Bovine) protein is Electron transfer flavoprotein-ubiquinone oxidoreductase, mitochondrial (ETFDH).